The chain runs to 712 residues: Glycine--tRNA ligase beta subunit (712 aa).

Belongs to the class-II aminoacyl-tRNA synthetase family. Tetramer of two alpha and two beta subunits.

Its subcellular location is the cytoplasm. It catalyses the reaction tRNA(Gly) + glycine + ATP = glycyl-tRNA(Gly) + AMP + diphosphate. This chain is Glycine--tRNA ligase beta subunit, found in Dechloromonas aromatica (strain RCB).